Consider the following 491-residue polypeptide: uncharacterized protein (491 aa).

Residue 266–273 (GIQGTGKS) coordinates ATP.

This sequence belongs to the AAA ATPase family. Highly divergent.

Its subcellular location is the plastid. It localises to the chloroplast. This is an uncharacterized protein from Porphyra purpurea (Red seaweed).